Consider the following 195-residue polypeptide: Inosine triphosphate pyrophosphatase (195 aa).

Thr13–Lys18 lines the ITP pocket. Glu43 is a binding site for Mg(2+). ITP-binding positions include Lys55, Asp71 to Thr72, Lys88, Phe148 to Asp151, Lys171, and His176 to Arg177.

This sequence belongs to the HAM1 NTPase family. In terms of assembly, homodimer. Mg(2+) is required as a cofactor. Requires Mn(2+) as cofactor.

It is found in the cytoplasm. The enzyme catalyses ITP + H2O = IMP + diphosphate + H(+). It carries out the reaction dITP + H2O = dIMP + diphosphate + H(+). The catalysed reaction is XTP + H2O = XMP + diphosphate + H(+). It catalyses the reaction N(6)-hydroxy-dATP + H2O = N(6)-hydroxy-dAMP + diphosphate + H(+). Functionally, pyrophosphatase that hydrolyzes the non-canonical purine nucleotides inosine triphosphate (ITP), deoxyinosine triphosphate (dITP) as well as 2'-deoxy-N-6-hydroxylaminopurine triphosphate (dHAPTP) and xanthosine 5'-triphosphate (XTP) to their respective monophosphate derivatives. The enzyme does not distinguish between the deoxy- and ribose forms. Probably excludes non-canonical purines from RNA and DNA precursor pools, thus preventing their incorporation into RNA and DNA and avoiding chromosomal lesions. In Xenopus laevis (African clawed frog), this protein is Inosine triphosphate pyrophosphatase (itpa).